The following is a 168-amino-acid chain: Photosystem I assembly protein Ycf3 (168 aa).

TPR repeat units lie at residues 35-68 (AFTY…EIDP), 72-105 (SYIL…NPFL), and 120-153 (GEQA…TPGN).

This sequence belongs to the Ycf3 family.

It is found in the plastid. Its subcellular location is the chloroplast thylakoid membrane. In terms of biological role, essential for the assembly of the photosystem I (PSI) complex. May act as a chaperone-like factor to guide the assembly of the PSI subunits. The polypeptide is Photosystem I assembly protein Ycf3 (Solanum lycopersicum (Tomato)).